We begin with the raw amino-acid sequence, 254 residues long: Winged helix repair factor 1 (254 aa).

A Bipartite nuclear localization signal motif is present at residues 4–21; it reads KRRLLASEAFGVKRRRAP. Winged helix domain regions lie at residues 32 to 104, 120 to 179, and 180 to 254; these read RAGS…GIVF, PCAG…LAVP, and GAGR…LPDT.

This sequence belongs to the STK19 family. As to quaternary structure, monomer in solution. Homodimer; when bound to DNA. Component of a transcription-coupled nucleotide excision repair (TC-NER) complex composed of STK19, ERCC6, ERCC8, DDA1, DDB1, ELOF1 and UVSSA which assembles and interacts with the multiprotein RNA polymerase II complex when it stalls at DNA lesions.

Its subcellular location is the nucleus. DNA-binding protein which is required for efficient transcription-coupled nucleotide excision repair (TC-NER). Acts as part of a TC-NER complex which assembles and interacts with RNA polymerase II (RNAPII) when it stalls at DNA lesions. TC-NER complex subunit UVSSA binds to the GTF2H1/p62 subunit of the TFIIH transcription factor complex, tethering TFIIH to the TC-NER complex. WHR1/STK19 then interacts with the XPD helicase subunit of TFIIH which guides TFIIH to DNA downstream of the stalled RNAPII, ensuring DNA repair. Directly interacts with RNAPII and also binds to downstream DNA. Promotes the timely removal of DNA damage-stalled RNAPII, allowing downstream NER factors to access DNA lesions. Required for monoubiquitination of UVSSA. Regulates repositioning and stabilization of UVSSA within the TC-NER complex. Stimulates ubiquitination of RNAPII complex member RBP1. Also binds to RNA and regulates the expression levels of many mRNAs. The protein is Winged helix repair factor 1 of Mus musculus (Mouse).